A 257-amino-acid chain; its full sequence is Granzyme M (257 aa).

Positions 1–23 (MEACVSSLLVLALGALSVGSSFG) are cleaved as a signal peptide. A propeptide spans 24–25 (TQ) (activation peptide). The Peptidase S1 domain occupies 26–254 (IIGGREVIPH…YVSWIRKVTG (229 aa)). Cysteines 51 and 67 form a disulfide. Catalysis depends on charge relay system residues H66 and D111. Disulfide bonds link C145/C213, C176/C192, and C203/C230. N-linked (GlcNAc...) asparagine glycosylation occurs at N177. S207 (charge relay system) is an active-site residue.

This sequence belongs to the peptidase S1 family. Granzyme subfamily. In terms of tissue distribution, highly and constitutively expressed in activated natural killer (NK) cells.

The protein localises to the secreted. The protein resides in the cytoplasmic granule. Cleaves peptide substrates after methionine, leucine, and norleucine. Physiological substrates include EZR, alpha-tubulins and the apoptosis inhibitor BIRC5/Survivin. Promotes caspase activation and subsequent apoptosis of target cells. In Homo sapiens (Human), this protein is Granzyme M (GZMM).